We begin with the raw amino-acid sequence, 95 residues long: Protein TusB (95 aa).

Belongs to the DsrH/TusB family. Heterohexamer, formed by a dimer of trimers. The hexameric TusBCD complex contains 2 copies each of TusB, TusC and TusD. The TusBCD complex interacts with TusE.

The protein localises to the cytoplasm. Functionally, part of a sulfur-relay system required for 2-thiolation of 5-methylaminomethyl-2-thiouridine (mnm(5)s(2)U) at tRNA wobble positions. The polypeptide is Protein TusB (Buchnera aphidicola subsp. Baizongia pistaciae (strain Bp)).